The primary structure comprises 239 residues: 2,3,4,5-tetrahydropyridine-2,6-dicarboxylate N-acetyltransferase (239 aa).

The protein belongs to the transferase hexapeptide repeat family. DapH subfamily.

It carries out the reaction (S)-2,3,4,5-tetrahydrodipicolinate + acetyl-CoA + H2O = L-2-acetamido-6-oxoheptanedioate + CoA. It functions in the pathway amino-acid biosynthesis; L-lysine biosynthesis via DAP pathway; LL-2,6-diaminopimelate from (S)-tetrahydrodipicolinate (acetylase route): step 1/3. Its function is as follows. Catalyzes the transfer of an acetyl group from acetyl-CoA to tetrahydrodipicolinate. This Staphylococcus aureus (strain bovine RF122 / ET3-1) protein is 2,3,4,5-tetrahydropyridine-2,6-dicarboxylate N-acetyltransferase.